The primary structure comprises 387 residues: 3-ketoacyl-CoA thiolase (387 aa).

Cys91 serves as the catalytic Acyl-thioester intermediate. Catalysis depends on proton acceptor residues His343 and Cys373.

Belongs to the thiolase-like superfamily. Thiolase family. As to quaternary structure, heterotetramer of two alpha chains (FadB) and two beta chains (FadA).

The protein resides in the cytoplasm. It catalyses the reaction an acyl-CoA + acetyl-CoA = a 3-oxoacyl-CoA + CoA. The protein operates within lipid metabolism; fatty acid beta-oxidation. Functionally, catalyzes the final step of fatty acid oxidation in which acetyl-CoA is released and the CoA ester of a fatty acid two carbons shorter is formed. In Vibrio vulnificus (strain YJ016), this protein is 3-ketoacyl-CoA thiolase.